We begin with the raw amino-acid sequence, 199 residues long: MPIEIPTDLTPELVPLSWLIGEWEGRGRLGSGDEDSEHFVQRVSFTHNGLPYLQYRAETWLSDDAGEKLRPLTVETGFWALERKLEEGDGGPGLIPADIVPVLKTADEVEERRNKEGGFDISVSIAHPGGITELYYGQIKGPQIQLSTDMVMRGSHSKEYTAATRIFGLVDGNLLWRWDVAASGKALEAHASAFLHKVS.

Positions Gly21–Gly27 match the GXWXGXG motif. His190 provides a ligand contact to heme b.

The protein belongs to the nitrobindin family. As to quaternary structure, homodimer. Requires heme b as cofactor.

The catalysed reaction is peroxynitrite = nitrate. Its pathway is nitrogen metabolism. Functionally, heme-binding protein able to scavenge peroxynitrite and to protect free L-tyrosine against peroxynitrite-mediated nitration, by acting as a peroxynitrite isomerase that converts peroxynitrite to nitrate. Therefore, this protein likely plays a role in peroxynitrite sensing and in the detoxification of reactive nitrogen and oxygen species (RNS and ROS, respectively). Is able to bind nitric oxide (NO) in vitro, but may act as a sensor of peroxynitrite levels in vivo. The chain is Peroxynitrite isomerase from Paenarthrobacter aurescens (strain TC1).